A 420-amino-acid polypeptide reads, in one-letter code: Reticulon-4 receptor-like 2 (420 aa).

Positions 1–30 (MLPGLRRLLQGPASACLLLTLLALPPVTPS) are cleaved as a signal peptide. 2 disulfide bridges follow: Cys-31–Cys-37 and Cys-35–Cys-46. The region spanning 31 to 60 (CPMLCTCYSSPPTVSCQANNFSSVPLSLPP) is the LRRNT domain. An N-linked (GlcNAc...) asparagine glycan is attached at Asn-50. LRR repeat units follow at residues 61-82 (STQR…TFGP), 83-104 (NLLT…TFRH), 107-129 (ALEE…TFQG), 132-153 (RLQS…IFRG), 156-177 (SLQY…LFAD), 180-201 (NLSH…VFRG), 204-225 (SLDR…AFHG), and 228-249 (RLTI…ALAD). Residue Asn-93 is glycosylated (N-linked (GlcNAc...) asparagine). N-linked (GlcNAc...) asparagine glycosylation is present at Asn-236. One can recognise an LRRCT domain in the interval 261 to 312 (NPWACDCRARPLWAWFQRARVSSSDVTCATPPERQGRDLRTLRDTDFQACPP). Disulfide bonds link Cys-265-Cys-288 and Cys-267-Cys-310. Residues 286–390 (VTCATPPERQ…GEQTCPGAAC (105 aa)) are disordered. The span at 294–306 (RQGRDLRTLRDTD) shows a compositional bias: basic and acidic residues. The segment at 315-327 (PTRPGSRARGNSS) is important for interaction with MAG. Basic and acidic residues predominate over residues 351–360 (LPAEDSRGRQ). Residue Cys-390 is the site of GPI-anchor amidated cysteine attachment. The propeptide at 391–420 (QAPADSRGPVLSAGLRTPLLCLLLLAPHHL) is removed in mature form.

This sequence belongs to the Nogo receptor family. In terms of assembly, interaction with MAG is controversial, and may be indirect. Interacts with MAG. Does not interact with OMG and RTN4. Post-translationally, undergoes zinc metalloproteinase-mediated ectodomain shedding in neuroblastoma cells; is released both as a full-length ectodomain and an N-terminal fragment containing the leucine-rich repeat (LRR) region of the protein. In terms of processing, N-glycosylated. O-glycosylated. Contains terminal sialic acid groups on its glycan chains. As to expression, detected in adult brain, in neocortex, hippocampus, striatum and dorsal root ganglion neurons, and in retina (at protein level). In brain, detected in cerebral cortex and hippocampus. Weak or no expression detected in the cerebellum, thalamus or striatum.

The protein resides in the cell membrane. The protein localises to the cell projection. It is found in the dendrite. It localises to the perikaryon. Its subcellular location is the axon. The protein resides in the membrane raft. Cell surface receptor that plays a functionally redundant role in the inhibition of neurite outgrowth mediated by MAG. Plays a functionally redundant role in postnatal brain development. Contributes to normal axon migration across the brain midline and normal formation of the corpus callosum. Does not seem to play a significant role in regulating axon regeneration in the adult central nervous system. Protects motoneurons against apoptosis; protection against apoptosis is probably mediated by MAG. Like other family members, plays a role in restricting the number dendritic spines and the number of synapses that are formed during brain development. Signaling mediates activation of Rho and downstream reorganization of the actin cytoskeleton. The sequence is that of Reticulon-4 receptor-like 2 from Rattus norvegicus (Rat).